A 141-amino-acid polypeptide reads, in one-letter code: MAKKVVALIKLALPAGKANPAPPVGPALGQHGVNIMAFCKEYNAKTSDQAGMVIPVEISVFEDRSFTFVLKTPPASVLIRKAAGIEKGSAQPNNQKVGSISRDQLKEIAQTKMPDLNANDIDAAMNIVEGTARNMGVTIND.

Belongs to the universal ribosomal protein uL11 family. As to quaternary structure, part of the ribosomal stalk of the 50S ribosomal subunit. Interacts with L10 and the large rRNA to form the base of the stalk. L10 forms an elongated spine to which L12 dimers bind in a sequential fashion forming a multimeric L10(L12)X complex. In terms of processing, one or more lysine residues are methylated.

Forms part of the ribosomal stalk which helps the ribosome interact with GTP-bound translation factors. The chain is Large ribosomal subunit protein uL11 from Crocosphaera subtropica (strain ATCC 51142 / BH68) (Cyanothece sp. (strain ATCC 51142)).